Reading from the N-terminus, the 304-residue chain is Ribosomal protein L11 methyltransferase (304 aa).

Thr147, Gly168, Asp190, and Asn238 together coordinate S-adenosyl-L-methionine.

Belongs to the methyltransferase superfamily. PrmA family.

It is found in the cytoplasm. The enzyme catalyses L-lysyl-[protein] + 3 S-adenosyl-L-methionine = N(6),N(6),N(6)-trimethyl-L-lysyl-[protein] + 3 S-adenosyl-L-homocysteine + 3 H(+). In terms of biological role, methylates ribosomal protein L11. The protein is Ribosomal protein L11 methyltransferase of Prochlorococcus marinus (strain SARG / CCMP1375 / SS120).